The primary structure comprises 143 residues: Transcriptional regulator MraZ (143 aa).

SpoVT-AbrB domains lie at 5 to 47 and 76 to 119; these read THSP…PIRE and ASNE…DAQT.

The protein belongs to the MraZ family. As to quaternary structure, forms oligomers.

The protein localises to the cytoplasm. Its subcellular location is the nucleoid. The polypeptide is Transcriptional regulator MraZ (Thermobifida fusca (strain YX)).